Here is a 593-residue protein sequence, read N- to C-terminus: SPI-1 type 3 secretion system translocon protein SctE (593 aa).

2 coiled-coil regions span residues 151–208 and 287–314; these read DTAK…ATDA and EGRQ…NRIM. 2 helical membrane-spanning segments follow: residues 330-350 and 409-429; these read VVAA…GLAV and IVGA…VAVV.

The protein belongs to the SctE/SipB/YopB family. The core secretion machinery of the T3SS is composed of approximately 20 different proteins, including cytoplasmic components, a base, an export apparatus and a needle. This subunit is involved in the formation of a pore, called the translocon, in host membrane.

The protein localises to the secreted. Its subcellular location is the host membrane. It localises to the host cell. In terms of biological role, component of the type III secretion system 1 (SPI-1 T3SS), also called injectisome, which is used to inject bacterial effector proteins into eukaryotic host cells. SipB/SctE1 and SipC/SctB are inserted into the host membrane where they form a pore and allow the translocation of effector proteins into the cytosol of target cells. Its function is as follows. Induces macrophage apoptosis either by binding and activating the proapoptotic enzyme caspase-1 (caspase-1 dependent), resulting in the release of interleukin-1 beta active form, or by disrupting mitochondria and inducing autophagy (caspase-1 independent). The former is dependent of its membrane-fusion activity. This is SPI-1 type 3 secretion system translocon protein SctE from Salmonella typhi.